The sequence spans 142 residues: HTH-type transcriptional regulator LysM (142 aa).

In terms of domain architecture, HTH asnC-type spans 6-69 (IDESDLKILE…ELENEIRAIV (64 aa)). The H-T-H motif DNA-binding region spans 25–44 (YTLIAKELKVSEAAIRKRIE).

As to quaternary structure, homotetramer.

Its subcellular location is the cytoplasm. It participates in amino-acid biosynthesis; L-lysine biosynthesis via AAA pathway [regulation]. In terms of biological role, in the absence or at low concentrations of lysine, activates the biosynthesis of this amino acid via the alpha-aminoadipate (AAA) pathway. This Saccharolobus solfataricus (strain ATCC 35092 / DSM 1617 / JCM 11322 / P2) (Sulfolobus solfataricus) protein is HTH-type transcriptional regulator LysM (lysM).